Here is a 460-residue protein sequence, read N- to C-terminus: Bifunctional protein GlmU (460 aa).

A pyrophosphorylase region spans residues 1–235; sequence MALSAAIVLA…PLTVEGVNDR (235 aa). UDP-N-acetyl-alpha-D-glucosamine is bound by residues 9 to 12, Lys-23, Gln-76, and 81 to 82; these read LAAG and GT. Asp-109 lines the Mg(2+) pocket. The UDP-N-acetyl-alpha-D-glucosamine site is built by Gly-146, Glu-161, Asn-176, and Asn-233. Asn-233 contributes to the Mg(2+) binding site. Positions 236–256 are linker; sequence VQLAALSKTYNRRVCERWMRD. An N-acetyltransferase region spans residues 257–460; it reads GVTILDPETT…VEGWKPAWER (204 aa). Residues Arg-338 and Lys-356 each coordinate UDP-N-acetyl-alpha-D-glucosamine. The active-site Proton acceptor is the His-368. UDP-N-acetyl-alpha-D-glucosamine is bound by residues Tyr-371 and Asn-382. Acetyl-CoA is bound by residues 391-392 and Ala-428; that span reads NY.

In the N-terminal section; belongs to the N-acetylglucosamine-1-phosphate uridyltransferase family. The protein in the C-terminal section; belongs to the transferase hexapeptide repeat family. Homotrimer. Mg(2+) is required as a cofactor.

The protein localises to the cytoplasm. It catalyses the reaction alpha-D-glucosamine 1-phosphate + acetyl-CoA = N-acetyl-alpha-D-glucosamine 1-phosphate + CoA + H(+). The enzyme catalyses N-acetyl-alpha-D-glucosamine 1-phosphate + UTP + H(+) = UDP-N-acetyl-alpha-D-glucosamine + diphosphate. Its pathway is nucleotide-sugar biosynthesis; UDP-N-acetyl-alpha-D-glucosamine biosynthesis; N-acetyl-alpha-D-glucosamine 1-phosphate from alpha-D-glucosamine 6-phosphate (route II): step 2/2. The protein operates within nucleotide-sugar biosynthesis; UDP-N-acetyl-alpha-D-glucosamine biosynthesis; UDP-N-acetyl-alpha-D-glucosamine from N-acetyl-alpha-D-glucosamine 1-phosphate: step 1/1. It functions in the pathway bacterial outer membrane biogenesis; LPS lipid A biosynthesis. Functionally, catalyzes the last two sequential reactions in the de novo biosynthetic pathway for UDP-N-acetylglucosamine (UDP-GlcNAc). The C-terminal domain catalyzes the transfer of acetyl group from acetyl coenzyme A to glucosamine-1-phosphate (GlcN-1-P) to produce N-acetylglucosamine-1-phosphate (GlcNAc-1-P), which is converted into UDP-GlcNAc by the transfer of uridine 5-monophosphate (from uridine 5-triphosphate), a reaction catalyzed by the N-terminal domain. The sequence is that of Bifunctional protein GlmU from Bifidobacterium longum (strain NCC 2705).